Here is a 201-residue protein sequence, read N- to C-terminus: 3-isopropylmalate dehydratase small subunit (201 aa).

This sequence belongs to the LeuD family. LeuD type 1 subfamily. As to quaternary structure, heterodimer of LeuC and LeuD.

It carries out the reaction (2R,3S)-3-isopropylmalate = (2S)-2-isopropylmalate. The protein operates within amino-acid biosynthesis; L-leucine biosynthesis; L-leucine from 3-methyl-2-oxobutanoate: step 2/4. Functionally, catalyzes the isomerization between 2-isopropylmalate and 3-isopropylmalate, via the formation of 2-isopropylmaleate. The chain is 3-isopropylmalate dehydratase small subunit from Pasteurella multocida (strain Pm70).